A 295-amino-acid polypeptide reads, in one-letter code: tRNA pseudouridine synthase B (295 aa).

Asp-42 acts as the Nucleophile in catalysis.

Belongs to the pseudouridine synthase TruB family. Type 1 subfamily.

It carries out the reaction uridine(55) in tRNA = pseudouridine(55) in tRNA. Responsible for synthesis of pseudouridine from uracil-55 in the psi GC loop of transfer RNAs. The sequence is that of tRNA pseudouridine synthase B from Cutibacterium acnes (strain DSM 16379 / KPA171202) (Propionibacterium acnes).